The sequence spans 119 residues: uncharacterized protein (119 aa).

The N-terminal stretch at 1 to 23 (MVKWAVSILVNALLLIVIDGYID) is a signal peptide. Helical transmembrane passes span 27–47 (ISSI…NVLI), 50–70 (LLII…LFVI), and 88–108 (IDGF…HLLI).

The protein resides in the cell membrane. This is an uncharacterized protein from Bacillus subtilis (strain 168).